Reading from the N-terminus, the 86-residue chain is Ferredoxin-like protein YgcO (86 aa).

Positions 45 to 74 (GNLRIDYRSCLECGTCRLLCDESTLQQWRY) constitute a 4Fe-4S ferredoxin-type domain.

This sequence belongs to the bacterial-type ferredoxin family. FixX subfamily.

Could be a 3Fe-4S cluster-containing protein. Probably participates in a redox process with YgcN, YgcQ and YgcR. The chain is Ferredoxin-like protein YgcO (ygcO) from Escherichia coli (strain K12).